We begin with the raw amino-acid sequence, 99 residues long: uncharacterized protein (99 aa).

The protein belongs to the ycf15 family.

It localises to the plastid. Its subcellular location is the chloroplast. This is an uncharacterized protein from Saccharum hybrid (Sugarcane).